Reading from the N-terminus, the 152-residue chain is Cell division protein SepF (152 aa).

Belongs to the SepF family. Homodimer. Interacts with FtsZ.

It localises to the cytoplasm. In terms of biological role, cell division protein that is part of the divisome complex and is recruited early to the Z-ring. Probably stimulates Z-ring formation, perhaps through the cross-linking of FtsZ protofilaments. Its function overlaps with FtsA. The chain is Cell division protein SepF from Listeria monocytogenes serotype 4b (strain CLIP80459).